The chain runs to 150 residues: Large ribosomal subunit protein uL15 (150 aa).

Residues 1 to 57 form a disordered region; that stretch reads MTLRLESLKPNKGARRRKLRKGRGIAAGQGASCGFGMRGQKSRSGRPTRPGFEGGQM. The segment covering 12 to 23 has biased composition (basic residues); that stretch reads KGARRRKLRKGR. Over residues 25–37 the composition is skewed to gly residues; it reads IAAGQGASCGFGM.

This sequence belongs to the universal ribosomal protein uL15 family. Part of the 50S ribosomal subunit.

Its function is as follows. Binds to the 23S rRNA. In Synechococcus sp. (strain CC9311), this protein is Large ribosomal subunit protein uL15.